The sequence spans 640 residues: Chaperone protein DnaK (640 aa).

Threonine 196 is modified (phosphothreonine; by autocatalysis). Disordered regions lie at residues asparagine 510–asparagine 530 and alanine 598–lysine 640.

Belongs to the heat shock protein 70 family.

In terms of biological role, acts as a chaperone. The chain is Chaperone protein DnaK from Prosthecochloris aestuarii (strain DSM 271 / SK 413).